The chain runs to 326 residues: Probable cell division protein WhiA (326 aa).

Positions 275–308 (SLDELGHHADPPMTKDAVAGRIRRLLAMADKKAV) form a DNA-binding region, H-T-H motif.

Belongs to the WhiA family.

Functionally, involved in cell division and chromosome segregation. This Clavibacter sepedonicus (Clavibacter michiganensis subsp. sepedonicus) protein is Probable cell division protein WhiA.